Consider the following 1239-residue polypeptide: Zinc finger and BTB domain-containing protein 40 (1239 aa).

The 64-residue stretch at 24-87 folds into the BTB domain; sequence CDCTISIGTI…MYTGKLPVGK (64 aa). 3 disordered regions span residues 130–231, 687–732, and 779–801; these read SAPS…TSTE, HLEA…PDPA, and KELD…PKKK. The segment covering 136–145 has biased composition (basic and acidic residues); the sequence is TFRKEPEKPQ. Residues 181–199 show a composition bias toward polar residues; that stretch reads SVSQEMSVNSPTAQESQRN. Phosphoserine is present on Ser190. A compositionally biased stretch (low complexity) spans 200–212; the sequence is AETPAETPTTAEA. Over residues 687 to 703 the composition is skewed to basic and acidic residues; it reads HLEANNKEDEKAAKEDS. At Ser703 the chain carries Phosphoserine. A compositionally biased stretch (polar residues) spans 705 to 719; sequence PGEQNDQGETGSLPG. 10 consecutive C2H2-type zinc fingers follow at residues 807-830, 836-858, 864-887, 893-915, 921-944, 950-973, 978-1000, 1006-1029, 1046-1069, and 1075-1098; these read VTCD…LTEH, FSCE…LRLH, FMCK…KKKH, YACQ…VRTH, YVCR…HTFH, YDCK…HEVH, HPCP…VVTH, FSCG…RTHH, LQCS…KAEH, and HECD…KCQH. Lys1066 participates in a covalent cross-link: Glycyl lysine isopeptide (Lys-Gly) (interchain with G-Cter in SUMO2). A C2H2-type 11; atypical zinc finger spans residues 1104–1127; it reads FRCLYCAATFRFPGALQHHVTTEH. A C2H2-type 12 zinc finger spans residues 1135 to 1158; sequence FPCELCGELFTSQAQLDSHLESEH.

Belongs to the krueppel C2H2-type zinc-finger protein family.

It localises to the nucleus. In terms of biological role, may be involved in transcriptional regulation. This Homo sapiens (Human) protein is Zinc finger and BTB domain-containing protein 40 (ZBTB40).